A 363-amino-acid chain; its full sequence is 3-isopropylmalate dehydrogenase (363 aa).

Position 78–91 (78–91) interacts with NAD(+); that stretch reads GPKWEHLPPAEQPE. 4 residues coordinate substrate: arginine 99, arginine 109, arginine 138, and aspartate 227. Residues aspartate 227, aspartate 251, and aspartate 255 each coordinate Mg(2+). 285 to 297 contributes to the NAD(+) binding site; the sequence is GSAPDIAGKDIAN.

Belongs to the isocitrate and isopropylmalate dehydrogenases family. LeuB type 1 subfamily. In terms of assembly, homodimer. Mg(2+) serves as cofactor. Mn(2+) is required as a cofactor.

It is found in the cytoplasm. The catalysed reaction is (2R,3S)-3-isopropylmalate + NAD(+) = 4-methyl-2-oxopentanoate + CO2 + NADH. The protein operates within amino-acid biosynthesis; L-leucine biosynthesis; L-leucine from 3-methyl-2-oxobutanoate: step 3/4. Catalyzes the oxidation of 3-carboxy-2-hydroxy-4-methylpentanoate (3-isopropylmalate) to 3-carboxy-4-methyl-2-oxopentanoate. The product decarboxylates to 4-methyl-2 oxopentanoate. The sequence is that of 3-isopropylmalate dehydrogenase from Pectobacterium atrosepticum (strain SCRI 1043 / ATCC BAA-672) (Erwinia carotovora subsp. atroseptica).